Consider the following 75-residue polypeptide: Mitochondrial import receptor subunit TOM7-1 (75 aa).

Met-1 bears the N-acetylmethionine mark. Residues 1 to 28 are disordered; it reads MESTISLKVNKGKGKGSKGASSSDDKSK. Over 1 to 46 the chain is Cytoplasmic; it reads MESTISLKVNKGKGKGSKGASSSDDKSKFDVVKEWTNWSLKKAKVV. The helical transmembrane segment at 47–64 threads the bilayer; it reads THYGFIPLVIFVGMNSDP. At 65–75 the chain is on the mitochondrial intermembrane side; sequence KPHLFQLLSPV.

This sequence belongs to the Tom7 family. As to quaternary structure, forms part of the preprotein translocase complex of the outer mitochondrial membrane (TOM complex) which consists of at least 6 different proteins (TOM5, TOM6, TOM7, TOM20, TOM22/TOM9 and TOM40). As to expression, expressed in roots, flowers, young cotyledons and leaves.

The protein localises to the mitochondrion outer membrane. Its function is as follows. Seems to act as a modulator of the dynamics of the mitochondrial protein transport machinery. Seems to promote the dissociation of subunits of the outer membrane translocase. The polypeptide is Mitochondrial import receptor subunit TOM7-1 (TOM7-1) (Arabidopsis thaliana (Mouse-ear cress)).